We begin with the raw amino-acid sequence, 727 residues long: Probable glutamate carboxypeptidase ARB_02390 (727 aa).

Residues Met-1–Gly-18 form the signal peptide. Asn-60 and Asn-80 each carry an N-linked (GlcNAc...) asparagine glycan. Positions Ala-158–Leu-296 constitute a PA domain. Arg-197 is a substrate binding site. An N-linked (GlcNAc...) asparagine glycan is attached at Asn-223. Positions Phe-255–Val-279 are disordered. Residues Thr-261 and Tyr-264 each contribute to the Ca(2+) site. The interval Ser-266–Leu-565 is NAALADase. N-linked (GlcNAc...) asparagine glycosylation is found at Asn-310, Asn-319, and Asn-353. His-366 contacts Zn(2+). Residue Glu-414 is the For NAALADase activity of the active site. Glu-415 lines the Zn(2+) pocket. Ca(2+)-binding residues include Glu-423 and Glu-426. Asp-443 lines the Zn(2+) pocket. Residues Thr-516 to Ala-518 and Tyr-530 each bind substrate. A Zn(2+)-binding site is contributed by His-531. Ser-604 serves as the catalytic Charge relay system. Residue Asn-614 is glycosylated (N-linked (GlcNAc...) asparagine). His-665 (charge relay system) is an active-site residue. Gly-675–Tyr-676 contributes to the substrate binding site. N-linked (GlcNAc...) asparagine glycosylation occurs at Asn-692.

Belongs to the peptidase M28 family. M28B subfamily. Requires Zn(2+) as cofactor.

It is found in the secreted. It catalyses the reaction Release of an unsubstituted, C-terminal glutamyl residue, typically from Ac-Asp-Glu or folylpoly-gamma-glutamates.. Has both folate hydrolase and N-acetylated-alpha-linked-acidic dipeptidase (NAALADase) activity. Also exhibits a dipeptidyl-peptidase IV type activity. This is Probable glutamate carboxypeptidase ARB_02390 from Arthroderma benhamiae (strain ATCC MYA-4681 / CBS 112371) (Trichophyton mentagrophytes).